Reading from the N-terminus, the 723-residue chain is Pentatricopeptide repeat-containing protein At5g50280, chloroplastic (723 aa).

The transit peptide at Met-1–Ser-44 directs the protein to the chloroplast. Residues Ile-70 to Thr-97 are disordered. The span at Glu-81–Thr-97 shows a compositional bias: acidic residues. 11 PPR repeats span residues Asp-272–Pro-306, Asp-307–Trp-342, Ser-343–Ser-377, Asn-378–Pro-412, Ser-413–Pro-447, Asn-448–Pro-483, Ser-484–Pro-518, Ser-519–Gly-553, Thr-554–Pro-588, Ser-589–Pro-623, and Asp-624–Pro-658. The segment at Thr-700–Ser-723 is disordered. Over residues Asn-713–Ser-723 the composition is skewed to polar residues.

This sequence belongs to the PPR family. P subfamily.

It is found in the plastid. The protein localises to the chloroplast. The sequence is that of Pentatricopeptide repeat-containing protein At5g50280, chloroplastic (EMB1006) from Arabidopsis thaliana (Mouse-ear cress).